A 364-amino-acid chain; its full sequence is 3-isopropylmalate dehydrogenase (364 aa).

Residue 79 to 92 (GSKWDHLPEIEKPE) coordinates NAD(+). Substrate is bound by residues Arg-100, Arg-110, Arg-139, and Asp-227. Asp-227, Asp-251, and Asp-255 together coordinate Mg(2+). Position 285 to 297 (285 to 297 (GSAPNIAGKTIAN)) interacts with NAD(+).

Belongs to the isocitrate and isopropylmalate dehydrogenases family. LeuB type 1 subfamily. In terms of assembly, homodimer. It depends on Mg(2+) as a cofactor. Requires Mn(2+) as cofactor.

The protein localises to the cytoplasm. The catalysed reaction is (2R,3S)-3-isopropylmalate + NAD(+) = 4-methyl-2-oxopentanoate + CO2 + NADH. The protein operates within amino-acid biosynthesis; L-leucine biosynthesis; L-leucine from 3-methyl-2-oxobutanoate: step 3/4. In terms of biological role, catalyzes the oxidation of 3-carboxy-2-hydroxy-4-methylpentanoate (3-isopropylmalate) to 3-carboxy-4-methyl-2-oxopentanoate. The product decarboxylates to 4-methyl-2 oxopentanoate. This Buchnera aphidicola subsp. Thelaxes suberi protein is 3-isopropylmalate dehydrogenase.